Consider the following 184-residue polypeptide: Large ribosomal subunit protein uL5 (184 aa).

It belongs to the universal ribosomal protein uL5 family. In terms of assembly, part of the 50S ribosomal subunit; part of the 5S rRNA/L5/L18/L25 subcomplex. Contacts the 5S rRNA and the P site tRNA. Forms a bridge to the 30S subunit in the 70S ribosome.

In terms of biological role, this is one of the proteins that bind and probably mediate the attachment of the 5S RNA into the large ribosomal subunit, where it forms part of the central protuberance. In the 70S ribosome it contacts protein S13 of the 30S subunit (bridge B1b), connecting the 2 subunits; this bridge is implicated in subunit movement. Contacts the P site tRNA; the 5S rRNA and some of its associated proteins might help stabilize positioning of ribosome-bound tRNAs. The polypeptide is Large ribosomal subunit protein uL5 (Agrobacterium fabrum (strain C58 / ATCC 33970) (Agrobacterium tumefaciens (strain C58))).